Here is a 75-residue protein sequence, read N- to C-terminus: Dermaseptin-DA2 (75 aa).

The signal sequence occupies residues 1–22; the sequence is MALVKKSLFLVLFLGLVSLSIC. The propeptide occupies 23–42; it reads EEKRENEDEEEQEDDEQSEE.

It belongs to the frog skin active peptide (FSAP) family. Dermaseptin subfamily. Expressed by the skin glands.

It is found in the secreted. Possesses a potent antimicrobial activity against Gram-positive and Gram-negative bacteria. Probably acts by disturbing membrane functions with its amphipathic structure. In Agalychnis dacnicolor (Giant Mexican leaf frog), this protein is Dermaseptin-DA2.